The following is a 283-amino-acid chain: Pantothenate synthetase (283 aa).

26–33 (MGNLHEGH) contributes to the ATP binding site. The active-site Proton donor is the His-33. Position 57 (Gln-57) interacts with (R)-pantoate. Beta-alanine is bound at residue Gln-57. 148-151 (GKKD) contributes to the ATP binding site. Residue Gln-154 coordinates (R)-pantoate. Residue 185-188 (LSSR) coordinates ATP.

This sequence belongs to the pantothenate synthetase family. Homodimer.

It is found in the cytoplasm. The enzyme catalyses (R)-pantoate + beta-alanine + ATP = (R)-pantothenate + AMP + diphosphate + H(+). Its pathway is cofactor biosynthesis; (R)-pantothenate biosynthesis; (R)-pantothenate from (R)-pantoate and beta-alanine: step 1/1. Catalyzes the condensation of pantoate with beta-alanine in an ATP-dependent reaction via a pantoyl-adenylate intermediate. This chain is Pantothenate synthetase, found in Polaromonas naphthalenivorans (strain CJ2).